Reading from the N-terminus, the 573-residue chain is Phosphoenolpyruvate-protein phosphotransferase (573 aa).

Catalysis depends on His190, which acts as the Tele-phosphohistidine intermediate. Substrate is bound by residues Arg297 and Arg333. Mg(2+) is bound by residues Glu432 and Asp456. 455-456 (ND) provides a ligand contact to phosphoenolpyruvate. Substrate is bound at residue Arg466. Cys503 (proton donor) is an active-site residue.

This sequence belongs to the PEP-utilizing enzyme family. Homodimer. The cofactor is Mg(2+).

The protein resides in the cytoplasm. The catalysed reaction is L-histidyl-[protein] + phosphoenolpyruvate = N(pros)-phospho-L-histidyl-[protein] + pyruvate. Its function is as follows. General (non sugar-specific) component of the phosphoenolpyruvate-dependent sugar phosphotransferase system (sugar PTS). This major carbohydrate active-transport system catalyzes the phosphorylation of incoming sugar substrates concomitantly with their translocation across the cell membrane. Enzyme I transfers the phosphoryl group from phosphoenolpyruvate (PEP) to the phosphoryl carrier protein (HPr). The protein is Phosphoenolpyruvate-protein phosphotransferase (ptsI) of Staphylococcus carnosus (strain TM300).